We begin with the raw amino-acid sequence, 322 residues long: Probable F-box protein At1g60180 (322 aa).

Residues 45-88 (FCELSDECIAKILSGCPILESLTLSHCIYLTVLDLSKSLRLRTL) enclose the F-box domain.

This chain is Probable F-box protein At1g60180, found in Arabidopsis thaliana (Mouse-ear cress).